A 1070-amino-acid polypeptide reads, in one-letter code: Isoleucine--tRNA ligase (1070 aa).

The 'HIGH' region signature appears at Pro50–Thr60. Positions Gly606–Ser610 match the 'KMSKS' region motif. Lys609 serves as a coordination point for ATP.

This sequence belongs to the class-I aminoacyl-tRNA synthetase family. IleS type 2 subfamily. In terms of assembly, monomer. The cofactor is Zn(2+).

The protein resides in the cytoplasm. The catalysed reaction is tRNA(Ile) + L-isoleucine + ATP = L-isoleucyl-tRNA(Ile) + AMP + diphosphate. Functionally, catalyzes the attachment of isoleucine to tRNA(Ile). As IleRS can inadvertently accommodate and process structurally similar amino acids such as valine, to avoid such errors it has two additional distinct tRNA(Ile)-dependent editing activities. One activity is designated as 'pretransfer' editing and involves the hydrolysis of activated Val-AMP. The other activity is designated 'posttransfer' editing and involves deacylation of mischarged Val-tRNA(Ile). This chain is Isoleucine--tRNA ligase, found in Halobacterium salinarum (strain ATCC 700922 / JCM 11081 / NRC-1) (Halobacterium halobium).